A 1013-amino-acid chain; its full sequence is MDCQNGRRANRTVRFARTAESRYPERYSYEYDPEETLSRAAPSMRNAPTIPPPTASGADEMRYTASRPASPARPWSPTRAADWVRPPSAAASYYERADINGSPRPGTPSSRYGGSPRRPLPPAPLFSKPGTTTQDTKIDIGDGEEDPFGGGGRTISSRHGPQGSVQSFTSESTFIADETDLEKVDLDEYEEESNETKSMVDPNLHYGPAPEKQSRRGVRNAQMAKKEVQLVNGELILECKIPTILHSFLPRRDDREFTHMRYTAVTCDPDDFTQRGYKLRQQIGRTMRETELFICITMYNEDETHFTRTMHGVMQNISHFCSRSKSRTWGKDGWKKIVVCIISDGRKKVHPRTLNALAALGVYQEGIAKNVVNQKQVNAHVYEYTTQVSLDSDLKFKGAEKGIVPCQVIFCLKEHNQKKLNSHRWFFNAFGRALQPNICILLDVGTRPEPTALYHLWKAFDQDSNVAGAAGEIKASKGKNMLGLLNPLVASQNFEYKMSNILDKPLESVFGYITVLPGALSAYRFFALQNDAEGNGPLNQYFKGETLHGKDADVFTANMYLAEDRILCWELVAKREERWVLRFVKSAVGETDVPDSIPEFISQRRRWLNGAFFAAVYSIVNVKQLWKTDHSLARKILLQIESVYQLLQLIFTYFGLANFYLAFFFIAGSLTDEKIDPFGHNMGKYIFIVLRYACVLVMCLQFIFSMGNRPQGAKKLYLSSMIVYSIVMAYTAFCTLYLIVLELMAKTGHDVPITMSDTLFVNIVVSLLSTVGLYFFTSFMYLDPWHMFTSSAQYFALLPSYICTLQCYAFCNTHDVTWGTKGDNTINTDLGTARIINGSIVEVEMPSEQLDIDSGYDAALRNLRDRLEVPDPGVSESQQQEDYYRAVRTYMVSVWMVANVVLAMAVSEVYGVGSSGTNVYLAIILWSVAVLAIIRAIGSTAYAVLYLIQKLVEGKAKFQAGNIASANASAAGSSLGTKSNVSYGSKGLNMTDRINETKWAISRGMQKAMFWKK.

Asn-10 is a glycosylation site (N-linked (GlcNAc...) asparagine). Disordered stretches follow at residues 26 to 83 (RYSY…AADW) and 95 to 218 (ERAD…RRGV). Residues 64–81 (TASRPASPARPWSPTRAA) are compositionally biased toward low complexity. The segment covering 154–173 (TISSRHGPQGSVQSFTSEST) has biased composition (polar residues). N-linked (GlcNAc...) asparagine glycans are attached at residues Asn-194 and Asn-316. The next 5 membrane-spanning stretches (helical) occupy residues 646–666 (LLQLIFTYFGLANFYLAFFFI), 686–706 (IFIVLRYACVLVMCLQFIFSM), 721–741 (MIVYSIVMAYTAFCTLYLIVL), 759–779 (LFVNIVVSLLSTVGLYFFTSF), and 792–811 (AQYFALLPSYICTLQCYAFC). The N-linked (GlcNAc...) asparagine glycan is linked to Asn-837. 2 helical membrane passes run 892-912 (VSVWMVANVVLAMAVSEVYGV) and 919-939 (VYLAIILWSVAVLAIIRAIGS). N-linked (GlcNAc...) asparagine glycosylation is found at Asn-967, Asn-980, Asn-989, and Asn-995.

It belongs to the chitin synthase family. Class II subfamily. As to expression, mainly expressed in the metulae, phialides, and conidia.

It is found in the cell membrane. The protein resides in the cell septum. The catalysed reaction is [(1-&gt;4)-N-acetyl-beta-D-glucosaminyl](n) + UDP-N-acetyl-alpha-D-glucosamine = [(1-&gt;4)-N-acetyl-beta-D-glucosaminyl](n+1) + UDP + H(+). Functionally, polymerizes chitin, a structural polymer of the cell wall and septum, by transferring the sugar moiety of UDP-GlcNAc to the non-reducing end of the growing chitin polymer. Seems not to be involved in hyphal growth, but, with chsC, chsA shares critical functions in hyphal wall integrity and differentiation. ChsA and chsC share also overlapping roles in septum formation. Invoved in the production of the asexual spores (conidia) that are formed by differentiated aerial hyphae called conidiophores. The protein is Chitin synthase A of Emericella nidulans (strain FGSC A4 / ATCC 38163 / CBS 112.46 / NRRL 194 / M139) (Aspergillus nidulans).